The sequence spans 492 residues: Sestrin-1 (492 aa).

The interval 71–252 is N-terminal domain; may mediate the alkylhydroperoxide reductase activity; sequence FADSFAALGR…ICDITNGNHS (182 aa). The active-site Cysteine sulfenic acid (-SOH) intermediate is cysteine 130. Serine 293 and serine 314 each carry phosphoserine. The segment at 321–492 is C-terminal domain; mediates TORC1 regulation; sequence PARDVSRHFE…ALRAITRYMT (172 aa). L-leucine is bound by residues 386-389, threonine 398, and glutamate 463; that span reads TYNT.

This sequence belongs to the sestrin family. As to quaternary structure, interacts with the GATOR2 complex which is composed of MIOS, SEC13, SEH1L, WDR24 and WDR59; the interaction is negatively regulated by leucine. Interacts with RRAGA, RRAGB, RRAGC and RRAGD; may function as a guanine nucleotide dissociation inhibitor for RRAGs and regulate them. Interacts with KEAP1, RBX1 and SQSTM1; in the SQSTM1-dependent autophagic degradation of KEAP1. May interact with PRDX1. As to expression, highly expressed in heart and also detected in liver and skeletal muscles (at protein level).

It localises to the nucleus. It is found in the cytoplasm. It catalyses the reaction a hydroperoxide + L-cysteinyl-[protein] = S-hydroxy-L-cysteinyl-[protein] + an alcohol. Functionally, functions as an intracellular leucine sensor that negatively regulates the TORC1 signaling pathway through the GATOR complex. In absence of leucine, binds the GATOR subcomplex GATOR2 and prevents TORC1 signaling. Binding of leucine to SESN2 disrupts its interaction with GATOR2 thereby activating the TORC1 signaling pathway. This stress-inducible metabolic regulator may also play a role in protection against oxidative and genotoxic stresses. May positively regulate the transcription by NFE2L2 of genes involved in the response to oxidative stress by facilitating the SQSTM1-mediated autophagic degradation of KEAP1. Moreover, may prevent the accumulation of reactive oxygen species (ROS) through the alkylhydroperoxide reductase activity born by the N-terminal domain of the protein. Was originally reported to contribute to oxidative stress resistance by reducing PRDX1. However, this could not be confirmed. This Mus musculus (Mouse) protein is Sestrin-1.